The primary structure comprises 75 residues: Defensin-like protein (75 aa).

The signal sequence occupies residues 1–24; the sequence is MEKKSIAGLCFLFLVLFVAQEVVV. Intrachain disulfides connect Cys31–Cys75, Cys42–Cys63, Cys48–Cys69, and Cys52–Cys71.

This sequence belongs to the DEFL family.

Its subcellular location is the secreted. This protein is required for germination. The protein is Defensin-like protein of Vigna unguiculata (Cowpea).